The chain runs to 360 residues: Phosphate acyltransferase (360 aa).

The span at 296 to 305 (STLRREHLDR) shows a compositional bias: basic and acidic residues. Positions 296 to 360 (STLRREHLDR…LRTAEPPGSL (65 aa)) are disordered. The segment covering 314–333 (PRQRRRPRRQKRRAACRPRP) has biased composition (basic residues). A compositionally biased stretch (low complexity) spans 334-350 (RSAAGRAPGSGVRGAAG).

Belongs to the PlsX family. In terms of assembly, homodimer. Probably interacts with PlsY.

It is found in the cytoplasm. The catalysed reaction is a fatty acyl-[ACP] + phosphate = an acyl phosphate + holo-[ACP]. The protein operates within lipid metabolism; phospholipid metabolism. Its function is as follows. Catalyzes the reversible formation of acyl-phosphate (acyl-PO(4)) from acyl-[acyl-carrier-protein] (acyl-ACP). This enzyme utilizes acyl-ACP as fatty acyl donor, but not acyl-CoA. The sequence is that of Phosphate acyltransferase from Deinococcus radiodurans (strain ATCC 13939 / DSM 20539 / JCM 16871 / CCUG 27074 / LMG 4051 / NBRC 15346 / NCIMB 9279 / VKM B-1422 / R1).